The primary structure comprises 111 residues: Cytochrome c oxidase subunit 6A1, mitochondrial (111 aa).

A mitochondrion-targeting transit peptide spans 1-26; the sequence is MASAVLSASRVSGLLGRALPRVGRPM. Residues 27-36 lie on the Mitochondrial matrix side of the membrane; the sequence is SSGAHGEEGS. Residues 37 to 61 form a helical membrane-spanning segment; sequence ARIWKALTYFVALPGVGVSMLNVFL. The Mitochondrial intermembrane portion of the chain corresponds to 62–111; sequence KSRHEEHERPEFVAYPHLRIRTKPFPWGDGNHTLFHNPHMNPLPTGYEDE.

It belongs to the cytochrome c oxidase subunit 6A family. In terms of assembly, component of the cytochrome c oxidase (complex IV, CIV), a multisubunit enzyme composed of 14 subunits. The complex is composed of a catalytic core of 3 subunits MT-CO1, MT-CO2 and MT-CO3, encoded in the mitochondrial DNA, and 11 supernumerary subunits COX4I, COX5A, COX5B, COX6A, COX6B, COX6C, COX7A, COX7B, COX7C, COX8 and NDUFA4, which are encoded in the nuclear genome. The complex exists as a monomer or a dimer and forms supercomplexes (SCs) in the inner mitochondrial membrane with NADH-ubiquinone oxidoreductase (complex I, CI) and ubiquinol-cytochrome c oxidoreductase (cytochrome b-c1 complex, complex III, CIII), resulting in different assemblies (supercomplex SCI(1)III(2)IV(1) and megacomplex MCI(2)III(2)IV(2)).

The protein localises to the mitochondrion inner membrane. The protein operates within energy metabolism; oxidative phosphorylation. In terms of biological role, component of the cytochrome c oxidase, the last enzyme in the mitochondrial electron transport chain which drives oxidative phosphorylation. The respiratory chain contains 3 multisubunit complexes succinate dehydrogenase (complex II, CII), ubiquinol-cytochrome c oxidoreductase (cytochrome b-c1 complex, complex III, CIII) and cytochrome c oxidase (complex IV, CIV), that cooperate to transfer electrons derived from NADH and succinate to molecular oxygen, creating an electrochemical gradient over the inner membrane that drives transmembrane transport and the ATP synthase. Cytochrome c oxidase is the component of the respiratory chain that catalyzes the reduction of oxygen to water. Electrons originating from reduced cytochrome c in the intermembrane space (IMS) are transferred via the dinuclear copper A center (CU(A)) of subunit 2 and heme A of subunit 1 to the active site in subunit 1, a binuclear center (BNC) formed by heme A3 and copper B (CU(B)). The BNC reduces molecular oxygen to 2 water molecules unsing 4 electrons from cytochrome c in the IMS and 4 protons from the mitochondrial matrix. The sequence is that of Cytochrome c oxidase subunit 6A1, mitochondrial (Cox6a1) from Rattus norvegicus (Rat).